A 172-amino-acid polypeptide reads, in one-letter code: Hemagglutinin/amebocyte aggregation factor (172 aa).

Positions 1–19 (MNSPAIVIIIFSTLTFSEA) are cleaved as a signal peptide. A run of 4 repeats spans residues 21–25 (VNDWD), 50–54 (EDRRW), 73–77 (VNDWD), and 102–106 (EDRRW). Cystine bridges form between C32/C58, C67/C172, C84/C110, C111/C117, and C123/C167. 2 consecutive repeat copies span residues 129 to 133 (VNSWD) and 158 to 162 (EDRRW).

This sequence belongs to the dermatopontin family.

The protein resides in the secreted. In terms of biological role, possesses the property of inducing both aggregation of amebocytes and agglutination of erythrocytes. The polypeptide is Hemagglutinin/amebocyte aggregation factor (Limulus polyphemus (Atlantic horseshoe crab)).